The primary structure comprises 125 residues: Prepro-urotensin II-alpha (125 aa).

The first 21 residues, 1–21, serve as a signal peptide directing secretion; that stretch reads MMCNLLLSFSVLLLSCTHLVA. Residues 109-111 constitute a propeptide that is removed on maturation; sequence QFR. An intrachain disulfide couples Cys119 to Cys124.

The protein belongs to the urotensin-2 family.

It localises to the secreted. Urotensin is found in the teleost caudal neurosecretory system. It has a suggested role in osmoregulation and as a corticotropin-releasing factor. The non-hormonal portion of this precursor may be a urotensin binding protein, urophysin. This Cyprinus carpio (Common carp) protein is Prepro-urotensin II-alpha.